Consider the following 113-residue polypeptide: Ig heavy chain V-III region U61 (113 aa).

Positions 1–113 (EVKLEESGGG…YWGQGTLVPV (113 aa)) constitute an Ig-like domain. An intrachain disulfide couples Cys22 to Cys98.

The chain is Ig heavy chain V-III region U61 from Mus musculus (Mouse).